Reading from the N-terminus, the 112-residue chain is uncharacterized protein (112 aa).

Residues 75–95 (ILGVFGGFIYILTPLPIVSGF) traverse the membrane as a helical segment.

It localises to the membrane. This is an uncharacterized protein from Methanocaldococcus jannaschii (strain ATCC 43067 / DSM 2661 / JAL-1 / JCM 10045 / NBRC 100440) (Methanococcus jannaschii).